The primary structure comprises 534 residues: Cytochrome c oxidase subunit 1 (534 aa).

Residues 16-36 (VLYFMLAIFSGMAGTAMSLII) traverse the membrane as a helical segment. Glu-39, Ala-42, and Gly-44 together coordinate Ca(2+). 6 helical membrane-spanning segments follow: residues 57–77 (VLVVGHAVLMIFFLVMPALIG), 101–121 (IAFWVLPMGLVCLVTSTLVES), 147–167 (AIFALHLTSISSLLGAINFIV), 182–202 (LPLFVWSIFITAFLLLLSLPV), 235–255 (LFYFFGHPEVYILIIPGFGII), and 267–287 (VFGEISMVYAMASIGLLGFLV). His-62 is a Fe(II)-heme a binding site. Residue His-241 coordinates Cu cation. The segment at residues 241-245 (HPEVY) is a cross-link (1'-histidyl-3'-tyrosine (His-Tyr)). O2 is bound at residue Tyr-245. Cu cation contacts are provided by His-290 and His-291. A run of 2 helical transmembrane segments spans residues 310-330 (MIIAIPTGIKIFSWLATIYGG) and 338-358 (MLYAIAFLFLFTMGGLTGVAL). His-368 and Asp-369 together coordinate Mg(2+). Transmembrane regions (helical) follow at residues 372–392 (YVVGHFHYVLSMGAIFSLFAG) and 414–434 (FWLIFIGANVIFFPMHFLGIN). His-376 contacts heme a3. His-378 contacts Fe(II)-heme a. Pro-441 contacts Ca(2+). The helical transmembrane segment at 452–472 (YVASIGSFIATLSLFLFIYIL) threads the bilayer.

The protein belongs to the heme-copper respiratory oxidase family. Component of the cytochrome c oxidase (complex IV, CIV), a multisubunit enzyme composed of a catalytic core of 3 subunits and several supernumerary subunits. The complex exists as a monomer or a dimer and forms supercomplexes (SCs) in the inner mitochondrial membrane with ubiquinol-cytochrome c oxidoreductase (cytochrome b-c1 complex, complex III, CIII). Heme serves as cofactor. It depends on Cu cation as a cofactor.

The protein localises to the mitochondrion inner membrane. The catalysed reaction is 4 Fe(II)-[cytochrome c] + O2 + 8 H(+)(in) = 4 Fe(III)-[cytochrome c] + 2 H2O + 4 H(+)(out). It participates in energy metabolism; oxidative phosphorylation. Its function is as follows. Component of the cytochrome c oxidase, the last enzyme in the mitochondrial electron transport chain which drives oxidative phosphorylation. The respiratory chain contains 3 multisubunit complexes succinate dehydrogenase (complex II, CII), ubiquinol-cytochrome c oxidoreductase (cytochrome b-c1 complex, complex III, CIII) and cytochrome c oxidase (complex IV, CIV), that cooperate to transfer electrons derived from NADH and succinate to molecular oxygen, creating an electrochemical gradient over the inner membrane that drives transmembrane transport and the ATP synthase. Cytochrome c oxidase is the component of the respiratory chain that catalyzes the reduction of oxygen to water. Electrons originating from reduced cytochrome c in the intermembrane space (IMS) are transferred via the dinuclear copper A center (CU(A)) of subunit 2 and heme A of subunit 1 to the active site in subunit 1, a binuclear center (BNC) formed by heme A3 and copper B (CU(B)). The BNC reduces molecular oxygen to 2 water molecules using 4 electrons from cytochrome c in the IMS and 4 protons from the mitochondrial matrix. In Saccharomyces paradoxus (Yeast), this protein is Cytochrome c oxidase subunit 1 (COXI).